We begin with the raw amino-acid sequence, 227 residues long: Cytidylate kinase (227 aa).

12-20 contributes to the ATP binding site; it reads GPSGAGKGT.

The protein belongs to the cytidylate kinase family. Type 1 subfamily.

The protein resides in the cytoplasm. It carries out the reaction CMP + ATP = CDP + ADP. The catalysed reaction is dCMP + ATP = dCDP + ADP. This chain is Cytidylate kinase, found in Shigella sonnei (strain Ss046).